A 441-amino-acid chain; its full sequence is Cysteine proteinase (441 aa).

An intrachain disulfide couples cysteine 249 to cysteine 290. Cysteine 252 is an active-site residue. Asparagine 270 and asparagine 345 each carry an N-linked (GlcNAc...) asparagine glycan. Residues histidine 381 and asparagine 403 contribute to the active site.

Belongs to the peptidase C1 family.

This chain is Cysteine proteinase (TACP), found in Theileria annulata.